The chain runs to 477 residues: Aspartyl/glutamyl-tRNA(Asn/Gln) amidotransferase subunit B (477 aa).

Belongs to the GatB/GatE family. GatB subfamily. In terms of assembly, heterotrimer of A, B and C subunits.

It catalyses the reaction L-glutamyl-tRNA(Gln) + L-glutamine + ATP + H2O = L-glutaminyl-tRNA(Gln) + L-glutamate + ADP + phosphate + H(+). The catalysed reaction is L-aspartyl-tRNA(Asn) + L-glutamine + ATP + H2O = L-asparaginyl-tRNA(Asn) + L-glutamate + ADP + phosphate + 2 H(+). Its function is as follows. Allows the formation of correctly charged Asn-tRNA(Asn) or Gln-tRNA(Gln) through the transamidation of misacylated Asp-tRNA(Asn) or Glu-tRNA(Gln) in organisms which lack either or both of asparaginyl-tRNA or glutaminyl-tRNA synthetases. The reaction takes place in the presence of glutamine and ATP through an activated phospho-Asp-tRNA(Asn) or phospho-Glu-tRNA(Gln). In Ureaplasma urealyticum serovar 10 (strain ATCC 33699 / Western), this protein is Aspartyl/glutamyl-tRNA(Asn/Gln) amidotransferase subunit B.